Here is a 113-residue protein sequence, read N- to C-terminus: MMTRWALVVFVVLMLDRILFVPGTPIPTFQLLPQNSLETTPSSVTSESSSGTTTGPSASWSNSKASPYLDTRVILSLDVPIGLLRILLEQARYKAARNQAATNAQILAHVGRR.

Residues 1 to 23 (MMTRWALVVFVVLMLDRILFVPG) form the signal peptide. Residues 24-71 (TPIPTFQLLPQNSLETTPSSVTSESSSGTTTGPSASWSNSKASPYLDT) constitute a propeptide that is removed on maturation. The segment covering 37-61 (LETTPSSVTSESSSGTTTGPSASWS) has biased composition (low complexity). The disordered stretch occupies residues 37–64 (LETTPSSVTSESSSGTTTGPSASWSNSK). Val110 carries the post-translational modification Valine amide; partial.

It belongs to the sauvagine/corticotropin-releasing factor/urotensin I family. Binds with high affinity to CRF receptors 2-alpha and 2-beta. Post-translationally, glycosylated.

It localises to the secreted. Functionally, suppresses food intake, delays gastric emptying and decreases heat-induced edema. Might represent an endogenous ligand for maintaining homeostasis after stress. The chain is Urocortin-2 (Ucn2) from Mus musculus (Mouse).